A 122-amino-acid polypeptide reads, in one-letter code: uncharacterized protein (122 aa).

The next 2 membrane-spanning stretches (helical) occupy residues 14-34 (WLWI…FNNV) and 83-103 (IIGV…YFII).

It is found in the cell membrane. This is an uncharacterized protein from Ureaplasma parvum serovar 3 (strain ATCC 700970).